Here is a 246-residue protein sequence, read N- to C-terminus: Ubiquinone/menaquinone biosynthesis C-methyltransferase UbiE (246 aa).

Residues threonine 75, aspartate 95, and 119-120 (DA) each bind S-adenosyl-L-methionine.

It belongs to the class I-like SAM-binding methyltransferase superfamily. MenG/UbiE family.

It catalyses the reaction a 2-demethylmenaquinol + S-adenosyl-L-methionine = a menaquinol + S-adenosyl-L-homocysteine + H(+). It carries out the reaction a 2-methoxy-6-(all-trans-polyprenyl)benzene-1,4-diol + S-adenosyl-L-methionine = a 5-methoxy-2-methyl-3-(all-trans-polyprenyl)benzene-1,4-diol + S-adenosyl-L-homocysteine + H(+). The protein operates within quinol/quinone metabolism; menaquinone biosynthesis; menaquinol from 1,4-dihydroxy-2-naphthoate: step 2/2. It functions in the pathway cofactor biosynthesis; ubiquinone biosynthesis. Methyltransferase required for the conversion of demethylmenaquinol (DMKH2) to menaquinol (MKH2) and the conversion of 2-polyprenyl-6-methoxy-1,4-benzoquinol (DDMQH2) to 2-polyprenyl-3-methyl-6-methoxy-1,4-benzoquinol (DMQH2). This is Ubiquinone/menaquinone biosynthesis C-methyltransferase UbiE from Desulfotalea psychrophila (strain LSv54 / DSM 12343).